The chain runs to 485 residues: Regulatory protein ViaA (485 aa).

The protein belongs to the ViaA family. As to quaternary structure, homodimer. Interacts with RavA.

Its subcellular location is the cytoplasm. Component of the RavA-ViaA chaperone complex, which may act on the membrane to optimize the function of some of the respiratory chains. ViaA stimulates the ATPase activity of RavA. This Photorhabdus laumondii subsp. laumondii (strain DSM 15139 / CIP 105565 / TT01) (Photorhabdus luminescens subsp. laumondii) protein is Regulatory protein ViaA.